The primary structure comprises 271 residues: Phosphatidate cytidylyltransferase (271 aa).

8 consecutive transmembrane segments (helical) span residues 12–32 (LLPI…ALFI), 53–73 (FGRV…YHLP), 75–95 (LAGA…VLVL), 111–131 (LGMG…LKQW), 136–156 (GLII…YFSG), 174–194 (WEGV…VGLY), 199–219 (LGAL…SIVG), and 251–271 (SLTA…WGAP).

The protein belongs to the CDS family.

Its subcellular location is the cell inner membrane. The enzyme catalyses a 1,2-diacyl-sn-glycero-3-phosphate + CTP + H(+) = a CDP-1,2-diacyl-sn-glycerol + diphosphate. Its pathway is phospholipid metabolism; CDP-diacylglycerol biosynthesis; CDP-diacylglycerol from sn-glycerol 3-phosphate: step 3/3. This chain is Phosphatidate cytidylyltransferase (cdsA), found in Pseudomonas aeruginosa (strain ATCC 15692 / DSM 22644 / CIP 104116 / JCM 14847 / LMG 12228 / 1C / PRS 101 / PAO1).